Consider the following 395-residue polypeptide: Flap endonuclease 1 (395 aa).

Residues 1–104 (MGIKHLYQVI…GELAKRFMRK (104 aa)) are N-domain. D34 provides a ligand contact to Mg(2+). 2 residues coordinate DNA: R47 and R70. Mg(2+) is bound by residues D86, E158, E160, D179, and D181. Residues 122–253 (DVEKFSRRTV…NTALKLIRDH (132 aa)) form an I-domain region. E158 is a binding site for DNA. Positions 231 and 233 each coordinate DNA. A Mg(2+)-binding site is contributed by D233. Residues 341-349 (QQSRLEGFF) are interaction with PCNA. The segment covering 357-389 (QEKATLKRKHEEKLELQKKKKKEEAKAKKEAKS) has biased composition (basic and acidic residues). Residues 357–395 (QEKATLKRKHEEKLELQKKKKKEEAKAKKEAKSKPRGAV) are disordered.

Belongs to the XPG/RAD2 endonuclease family. FEN1 subfamily. As to quaternary structure, interacts with PCNA. Three molecules of FEN1 bind to one PCNA trimer with each molecule binding to one PCNA monomer. PCNA stimulates the nuclease activity without altering cleavage specificity. Mg(2+) is required as a cofactor. Phosphorylated. Phosphorylation upon DNA damage induces relocalization to the nuclear plasma.

It localises to the nucleus. The protein localises to the nucleolus. The protein resides in the nucleoplasm. It is found in the mitochondrion. Functionally, structure-specific nuclease with 5'-flap endonuclease and 5'-3' exonuclease activities involved in DNA replication and repair. During DNA replication, cleaves the 5'-overhanging flap structure that is generated by displacement synthesis when DNA polymerase encounters the 5'-end of a downstream Okazaki fragment. It enters the flap from the 5'-end and then tracks to cleave the flap base, leaving a nick for ligation. Also involved in the long patch base excision repair (LP-BER) pathway, by cleaving within the apurinic/apyrimidinic (AP) site-terminated flap. Acts as a genome stabilization factor that prevents flaps from equilibrating into structures that lead to duplications and deletions. Also possesses 5'-3' exonuclease activity on nicked or gapped double-stranded DNA, and exhibits RNase H activity. Also involved in replication and repair of rDNA and in repairing mitochondrial DNA. This Ajellomyces dermatitidis (strain ER-3 / ATCC MYA-2586) (Blastomyces dermatitidis) protein is Flap endonuclease 1.